We begin with the raw amino-acid sequence, 156 residues long: Small ribosomal subunit protein uS7 (156 aa).

The protein belongs to the universal ribosomal protein uS7 family. In terms of assembly, part of the 30S ribosomal subunit. Contacts proteins S9 and S11.

In terms of biological role, one of the primary rRNA binding proteins, it binds directly to 16S rRNA where it nucleates assembly of the head domain of the 30S subunit. Is located at the subunit interface close to the decoding center, probably blocks exit of the E-site tRNA. This Nitrosomonas eutropha (strain DSM 101675 / C91 / Nm57) protein is Small ribosomal subunit protein uS7.